The sequence spans 100 residues: Large ribosomal subunit protein uL23 (100 aa).

It belongs to the universal ribosomal protein uL23 family. As to quaternary structure, part of the 50S ribosomal subunit. Contacts protein L29, and trigger factor when it is bound to the ribosome.

One of the early assembly proteins it binds 23S rRNA. One of the proteins that surrounds the polypeptide exit tunnel on the outside of the ribosome. Forms the main docking site for trigger factor binding to the ribosome. The chain is Large ribosomal subunit protein uL23 from Mycobacterium ulcerans (strain Agy99).